A 483-amino-acid chain; its full sequence is MKFIIKLFPEITIKSQSVRLRFIKILTTNIRNVLKHLEDDTLAIVRHWDHIELRTKDGNLGPEICDALTRIPGIHHILEVEDRSYSDMHNIFEQTLEAYRETLVGKTFCVRVKRRGKHEFSSGDVERYVGGGLNQHIESAKVNLTRPQVTVNLEVDQDKLILVKARHEGLGGFPIGTQEDVLSLISGGFDSGVSSYMLMRRGCRVHYCFFNLGGSAHEIGVKQVAHYLWNRFGSSHRVRFIAIDFEPVVGEILEKVEDGQMGVVLKRMMVRAASQVAERYGVQALVTGEALGQVSSQTLTNLRLIDNASDTLILRPLISHDKEHIINLARQIGTEDFAKTMPEYCGVISKSPTVKAVKAKIEEEESHFDFSILDRVVSEAKNVDIREIAQQSREQVVEVETVAELADTDVLLDIRAPDEQEEKPLKLDQVEVRSLPFYKLSSQFADLDQSKTYLLYCDRGVMSRLQALYLREQGYTNVKVYRP.

One can recognise a THUMP domain in the interval 62-166 (PEICDALTRI…QDKLILVKAR (105 aa)). Residues 184–185 (LI), Lys-266, Gly-288, and Gln-297 contribute to the ATP site. Cys-345 and Cys-457 are disulfide-bonded. The 79-residue stretch at 405 to 483 (LADTDVLLDI…GYTNVKVYRP (79 aa)) folds into the Rhodanese domain. Catalysis depends on Cys-457, which acts as the Cysteine persulfide intermediate.

The protein belongs to the ThiI family.

The protein localises to the cytoplasm. The catalysed reaction is [ThiI sulfur-carrier protein]-S-sulfanyl-L-cysteine + a uridine in tRNA + 2 reduced [2Fe-2S]-[ferredoxin] + ATP + H(+) = [ThiI sulfur-carrier protein]-L-cysteine + a 4-thiouridine in tRNA + 2 oxidized [2Fe-2S]-[ferredoxin] + AMP + diphosphate. It catalyses the reaction [ThiS sulfur-carrier protein]-C-terminal Gly-Gly-AMP + S-sulfanyl-L-cysteinyl-[cysteine desulfurase] + AH2 = [ThiS sulfur-carrier protein]-C-terminal-Gly-aminoethanethioate + L-cysteinyl-[cysteine desulfurase] + A + AMP + 2 H(+). Its pathway is cofactor biosynthesis; thiamine diphosphate biosynthesis. Its function is as follows. Catalyzes the ATP-dependent transfer of a sulfur to tRNA to produce 4-thiouridine in position 8 of tRNAs, which functions as a near-UV photosensor. Also catalyzes the transfer of sulfur to the sulfur carrier protein ThiS, forming ThiS-thiocarboxylate. This is a step in the synthesis of thiazole, in the thiamine biosynthesis pathway. The sulfur is donated as persulfide by IscS. This Yersinia pseudotuberculosis serotype IB (strain PB1/+) protein is tRNA sulfurtransferase.